We begin with the raw amino-acid sequence, 120 residues long: NAD(P)H-quinone oxidoreductase subunit 3, chloroplastic (120 aa).

A run of 3 helical transmembrane segments spans residues 7–27 (YETF…AFLI), 64–84 (MFAL…PWAM), and 88–108 (ILGI…IVGS).

Belongs to the complex I subunit 3 family. In terms of assembly, NDH is composed of at least 16 different subunits, 5 of which are encoded in the nucleus.

It is found in the plastid. The protein resides in the chloroplast thylakoid membrane. It carries out the reaction a plastoquinone + NADH + (n+1) H(+)(in) = a plastoquinol + NAD(+) + n H(+)(out). It catalyses the reaction a plastoquinone + NADPH + (n+1) H(+)(in) = a plastoquinol + NADP(+) + n H(+)(out). Functionally, NDH shuttles electrons from NAD(P)H:plastoquinone, via FMN and iron-sulfur (Fe-S) centers, to quinones in the photosynthetic chain and possibly in a chloroplast respiratory chain. The immediate electron acceptor for the enzyme in this species is believed to be plastoquinone. Couples the redox reaction to proton translocation, and thus conserves the redox energy in a proton gradient. The protein is NAD(P)H-quinone oxidoreductase subunit 3, chloroplastic of Cycas taitungensis (Prince sago).